A 121-amino-acid chain; its full sequence is Small ribosomal subunit protein bS21m (121 aa).

The transit peptide at 1–14 (MNSSYFPGVLGVRW) directs the protein to the mitochondrion.

It belongs to the bacterial ribosomal protein bS21 family. As to quaternary structure, component of the mitochondrial small ribosomal subunit (mt-SSU). Mature yeast 74S mitochondrial ribosomes consist of a small (37S) and a large (54S) subunit. The 37S small subunit contains a 15S ribosomal RNA (15S mt-rRNA) and at least 32 different proteins. The 54S large subunit contains a 21S rRNA (21S mt-rRNA) and at least 45 different proteins.

The protein resides in the mitochondrion. In terms of biological role, component of the mitochondrial ribosome (mitoribosome), a dedicated translation machinery responsible for the synthesis of mitochondrial genome-encoded proteins, including at least some of the essential transmembrane subunits of the mitochondrial respiratory chain. The mitoribosomes are attached to the mitochondrial inner membrane and translation products are cotranslationally integrated into the membrane. This chain is Small ribosomal subunit protein bS21m (mrp21), found in Schizosaccharomyces pombe (strain 972 / ATCC 24843) (Fission yeast).